We begin with the raw amino-acid sequence, 1006 residues long: SAC3 family protein A (1006 aa).

Disordered regions lie at residues 1–75 (MNHG…GPAT), 106–162 (TPYQ…PGSY), 183–239 (GYQS…TIAT), 266–326 (GTEK…AVST), 516–550 (TVTT…RWEP), 595–638 (GFKP…SDKD), and 650–690 (AGSA…GNLH). Composition is skewed to polar residues over residues 26-75 (GSQT…GPAT) and 106-115 (TPYQTSSDPH). Low complexity predominate over residues 116–140 (NYSNTGYSNYYSGYQQQPSQSYPQP). Residues 144–162 (YQNTGAPQPLSSFQNPGSY) show a composition bias toward polar residues. Polar residues-rich tracts occupy residues 269-282 (KLST…SQSF) and 313-326 (SHPP…AVST). Residues 516–539 (TVTTTNVTNSESSSAQLSSLQNKS) show a composition bias toward low complexity. Over residues 609–618 (SFQRPVKRQR) the composition is skewed to basic residues. Basic and acidic residues predominate over residues 653–680 (AEEKKRRDSRSKRFEKIQGHSRGNDLTK). The PCI domain occupies 804-978 (DLPEYNQCLS…DMLLDTKATS (175 aa)).

It belongs to the SAC3 family. Interacts with EER5, SAC3B and CML20.

The protein resides in the nucleus. Its function is as follows. Component of the TREX-2 complex (transcription and export complex 2), a muliprotein complex that functions in docking export-competent ribonucleoprotein particles (mRNPs) to the nuclear entrance of the nuclear pore complex (nuclear basket). TREX-2 participates in mRNA export and accurate chromatin positioning in the nucleus by tethering genes to the nuclear periphery. In Arabidopsis thaliana (Mouse-ear cress), this protein is SAC3 family protein A.